The chain runs to 178 residues: Putative metal-dependent hydrolase GTNG_0529 (178 aa).

Zn(2+) is bound by residues H68, H161, and H165.

It belongs to the metal hydrolase YfiT family. Homodimer. It depends on Zn(2+) as a cofactor.

The protein resides in the cytoplasm. Functionally, possible metal-dependent hydrolase. In Geobacillus thermodenitrificans (strain NG80-2), this protein is Putative metal-dependent hydrolase GTNG_0529.